Consider the following 313-residue polypeptide: Malate dehydrogenase (313 aa).

NAD(+) is bound by residues 8–13 and D33; that span reads GAGNVG. Residues R83 and R89 each coordinate substrate. Residues N96 and 119-121 each bind NAD(+); that span reads ISN. Substrate is bound by residues N121 and R152. H176 functions as the Proton acceptor in the catalytic mechanism.

Belongs to the LDH/MDH superfamily. MDH type 3 family.

It carries out the reaction (S)-malate + NAD(+) = oxaloacetate + NADH + H(+). In terms of biological role, catalyzes the reversible oxidation of malate to oxaloacetate. This is Malate dehydrogenase from Bacteroides thetaiotaomicron (strain ATCC 29148 / DSM 2079 / JCM 5827 / CCUG 10774 / NCTC 10582 / VPI-5482 / E50).